The sequence spans 656 residues: MGKIIELNEALANQIAAGEVVERPASVVKELVENSIDAGSSKIIINVEEAGLRLIEVIDNGLGLEKEDVALALRRHATSKIKDSADLFRIRTLGFRGEALPSIASVSQMTIETSTAEEESGTKLVAKGGNIETLEPLAKRVGTKISVANLFYNTPARLKYIKSLQAELSHITDIINRLSLAHPEISFTLVNEGKEFLKTAGNGDLRQVIAAIYGIGTAKKMRQIKGSDLDFELTGYVSLPELTRANRNYITILINGRFIKNFLLNRAILEGYGNRLMVGRFPFAILSIKIDPTLADVNVHPTKQEVRLSKERELMALISKAIDEALSEGVLIPEALENLQGRAKEKESLSVQTELPLQNNPLYYDNVRQDFYVREEATFKINKNQASNDSSEQTFDNFTENQLNTDAVSEKMTDRTVESTTEITDNSLENTVSNFEIDFDNEAKISQSSTFPQLEYLAQLHATYLLCQSKEGLYLVDQHAAQERIKYEYWKDKIGEVSMEQQILLAPYLFTLAKNDFIVLAEKKDLLHEAGVFLEEYGENQFILREHPIWLKETEIEKSINEMIDIILSSKEFSLKKYRHDLAAMVACKSSIKANHPLDAESARALLAELATCKNPYSCAHGRPTIVHFSGDDIQKMFRRIQETHRSKAASWKDFE.

The protein belongs to the DNA mismatch repair MutL/HexB family.

Its function is as follows. This protein is involved in the repair of mismatches in DNA. It is required for dam-dependent methyl-directed DNA mismatch repair. May act as a 'molecular matchmaker', a protein that promotes the formation of a stable complex between two or more DNA-binding proteins in an ATP-dependent manner without itself being part of a final effector complex. The polypeptide is DNA mismatch repair protein MutL (Lactococcus lactis subsp. lactis (strain IL1403) (Streptococcus lactis)).